The following is a 354-amino-acid chain: Uroporphyrinogen decarboxylase (354 aa).

Residues 27–31 (RQAGR), Asp77, Tyr154, Thr209, and His327 each bind substrate.

Belongs to the uroporphyrinogen decarboxylase family. As to quaternary structure, homodimer.

It localises to the cytoplasm. It catalyses the reaction uroporphyrinogen III + 4 H(+) = coproporphyrinogen III + 4 CO2. The protein operates within porphyrin-containing compound metabolism; protoporphyrin-IX biosynthesis; coproporphyrinogen-III from 5-aminolevulinate: step 4/4. Catalyzes the decarboxylation of four acetate groups of uroporphyrinogen-III to yield coproporphyrinogen-III. In Hydrogenovibrio crunogenus (strain DSM 25203 / XCL-2) (Thiomicrospira crunogena), this protein is Uroporphyrinogen decarboxylase.